The sequence spans 67 residues: Prokaryotic ubiquitin-like protein Pup (67 aa).

Positions 1-11 (MAGQEQQQPQS) are enriched in low complexity. A disordered region spans residues 1–47 (MAGQEQQQPQSRESEFEDDAPATPPAPGEAQASAATQGVDDLLDEID). The interval 25–61 (PAPGEAQASAATQGVDDLLDEIDGVLESNAEEFVRAF) is ARC ATPase binding. Q67 is modified (deamidated glutamine). An Isoglutamyl lysine isopeptide (Gln-Lys) (interchain with K-? in acceptor proteins) cross-link involves residue Q67.

Belongs to the prokaryotic ubiquitin-like protein family. As to quaternary structure, strongly interacts with the proteasome-associated ATPase ARC through a hydrophobic interface; the interacting region of Pup lies in its C-terminal half. There is one Pup binding site per ARC hexamer ring. Is modified by deamidation of its C-terminal glutamine to glutamate by the deamidase Dop, a prerequisite to the subsequent pupylation process.

It functions in the pathway protein degradation; proteasomal Pup-dependent pathway. In terms of biological role, protein modifier that is covalently attached to lysine residues of substrate proteins, thereby targeting them for proteasomal degradation. The tagging system is termed pupylation. This chain is Prokaryotic ubiquitin-like protein Pup, found in Arthrobacter sp. (strain FB24).